We begin with the raw amino-acid sequence, 475 residues long: Homeobox even-skipped homolog protein 2 (475 aa).

Disordered stretches follow at residues 82 to 113 and 155 to 189; these read PSSE…AEAD and TSAS…SGAD. Residues 83–96 show a composition bias toward low complexity; that stretch reads SSESTVSSEIASAT. Positions 160-186 are enriched in gly residues; the sequence is SGLGSLHGGGGGGNSGAAALGGSGSGS. Positions 191–250 form a DNA-binding region, homeobox; the sequence is VRRYRTAFTREQIARLEKEFYRENYVSRPRRCELAAALNLPETTIKVWFQNRRMKDKRQR.

It belongs to the even-skipped homeobox family.

The protein localises to the nucleus. The polypeptide is Homeobox even-skipped homolog protein 2 (Evx2) (Mus musculus (Mouse)).